The chain runs to 398 residues: Phosphoglycerate kinase (398 aa).

Residues aspartate 21 to asparagine 23, arginine 37, histidine 60 to arginine 63, arginine 117, and arginine 157 contribute to the substrate site. ATP is bound by residues glutamate 332 and glycine 357 to threonine 360.

The protein belongs to the phosphoglycerate kinase family. Monomer.

It localises to the cytoplasm. It catalyses the reaction (2R)-3-phosphoglycerate + ATP = (2R)-3-phospho-glyceroyl phosphate + ADP. The protein operates within carbohydrate degradation; glycolysis; pyruvate from D-glyceraldehyde 3-phosphate: step 2/5. The chain is Phosphoglycerate kinase from Halobacterium salinarum (strain ATCC 29341 / DSM 671 / R1).